The chain runs to 233 residues: Lipoprotein-releasing system ATP-binding protein LolD (233 aa).

The ABC transporter domain occupies 9-233 (LAINAVSKVF…GILSQSETHR (225 aa)). 45 to 52 (GSSGSGKS) provides a ligand contact to ATP.

The protein belongs to the ABC transporter superfamily. Lipoprotein translocase (TC 3.A.1.125) family. In terms of assembly, the complex is composed of two ATP-binding proteins (LolD) and two transmembrane proteins (LolC and LolE).

It localises to the cell inner membrane. Part of the ABC transporter complex LolCDE involved in the translocation of mature outer membrane-directed lipoproteins, from the inner membrane to the periplasmic chaperone, LolA. Responsible for the formation of the LolA-lipoprotein complex in an ATP-dependent manner. The polypeptide is Lipoprotein-releasing system ATP-binding protein LolD (Shewanella denitrificans (strain OS217 / ATCC BAA-1090 / DSM 15013)).